Here is a 346-residue protein sequence, read N- to C-terminus: Beta-ketoacyl-[acyl-carrier-protein] synthase III (346 aa).

Catalysis depends on residues cysteine 120 and histidine 256. The ACP-binding stretch occupies residues 257 to 261 (QANIR). The active site involves asparagine 286.

Belongs to the thiolase-like superfamily. FabH family. In terms of assembly, homodimer.

The protein resides in the cytoplasm. It catalyses the reaction malonyl-[ACP] + acetyl-CoA + H(+) = 3-oxobutanoyl-[ACP] + CO2 + CoA. It functions in the pathway lipid metabolism; fatty acid biosynthesis. Catalyzes the condensation reaction of fatty acid synthesis by the addition to an acyl acceptor of two carbons from malonyl-ACP. Catalyzes the first condensation reaction which initiates fatty acid synthesis and may therefore play a role in governing the total rate of fatty acid production. Possesses both acetoacetyl-ACP synthase and acetyl transacylase activities. Its substrate specificity determines the biosynthesis of branched-chain and/or straight-chain of fatty acids. The sequence is that of Beta-ketoacyl-[acyl-carrier-protein] synthase III from Deinococcus geothermalis (strain DSM 11300 / CIP 105573 / AG-3a).